The primary structure comprises 413 residues: MRSEITRETKLLFDLPQDVIEEIFSKVPVTCLRRIRSTCKRLYALLKDRGFIRKHFAKSARQYHALMLKNFRFYSVSFNPNGTEMDVASLFNGERSLIDPYSSSEAIISQAFHCDGLLLCTTKENRLVVLNPFSGQTKWLQPQNRCKIDEAYVLGYDNSDLCHSYKILSFPDLYEQELETIKNAGRDLDVTPEGDLELKTDDFSSNSWRRNLGVTPHGGLGLKIYDFSSNSWKKLDVITPEGCLKSYGVSLKGNAYWVYMSKRRGVNDYSLLSFDFSTESFQHLCVPFHQEADCFGTMALSVVREEHLSLLYQSCETLKVEIWMTKEIDTTFVSWKKFLTVDLEPHLPHLLMFSCRMSFFIDEEKKVAVCCDRDNKVHVVGEDEYRVSSGFYFLDFEGITCCLTVFGYVPRLV.

Residues 9–55 enclose the F-box domain; the sequence is TKLLFDLPQDVIEEIFSKVPVTCLRRIRSTCKRLYALLKDRGFIRKH.

This chain is Putative F-box protein At3g17560, found in Arabidopsis thaliana (Mouse-ear cress).